The following is a 136-amino-acid chain: uncharacterized protein (136 aa).

It localises to the cytoplasm. Its subcellular location is the nucleus. This is an uncharacterized protein from Schizosaccharomyces pombe (strain 972 / ATCC 24843) (Fission yeast).